Reading from the N-terminus, the 385-residue chain is MSNKDQEIKEEAPVAIEDLSNPVVVDSYNAAGIIANNAIKHVISKCVVGALVVDICQYGDDFIEAEAAKTFTKRKNLEKGIAFPTCVSVNNCVGHFSPLKGNTRTLKQGDVVKIDLGCHIDGYIAVGAHTIIIGNTSAESMTGKVADAICAAHYALEAALRMIRPGKTSNEVTQVIEKISDMYGVTSVSGILSHELKRFIIDGEKVIFSKNEPSQKIQTYEFQENEVYCIDIVMSTGEGKAREEADRPTIYRRNLDSTYKLKSKASRDFKDQIVKRYSALPFPLRNFDEKVSKLGLVELVEHQVLAAYPVLFDRSGCEVVQFKTTVLVLPNGNHKLIGTEFPLPFVRSEFSVTDDAIKALIASPLKINKKAAKKASATTIDVKMQ.

This sequence belongs to the peptidase M24 family.

The protein is Proliferation-associated protein A (prlA) of Dictyostelium discoideum (Social amoeba).